The sequence spans 380 residues: Lipid-A-disaccharide synthase (380 aa).

It belongs to the LpxB family.

It carries out the reaction a lipid X + a UDP-2-N,3-O-bis[(3R)-3-hydroxyacyl]-alpha-D-glucosamine = a lipid A disaccharide + UDP + H(+). Its pathway is bacterial outer membrane biogenesis; LPS lipid A biosynthesis. Condensation of UDP-2,3-diacylglucosamine and 2,3-diacylglucosamine-1-phosphate to form lipid A disaccharide, a precursor of lipid A, a phosphorylated glycolipid that anchors the lipopolysaccharide to the outer membrane of the cell. This is Lipid-A-disaccharide synthase from Rickettsia typhi (strain ATCC VR-144 / Wilmington).